The chain runs to 441 residues: Probable cyclic di-GMP phosphodiesterase VC_1348 (441 aa).

In terms of domain architecture, Response regulatory spans 72 to 187 (TILIVDDSPD…LLKSRVHTHL (116 aa)). Residue Asp120 is modified to 4-aspartylphosphate. The HD-GYP domain maps to 214-425 (LDRMQDAVVF…FIDIAQKFAD (212 aa)).

The catalysed reaction is 3',3'-c-di-GMP + 2 H2O = 2 GMP + 2 H(+). Functionally, probable phosphodiesterase (PDE) that catalyzes the hydrolysis of cyclic diguanylate (c-di-GMP). Increases motility and decreases biofilm formation in vivo. The polypeptide is Probable cyclic di-GMP phosphodiesterase VC_1348 (Vibrio cholerae serotype O1 (strain ATCC 39315 / El Tor Inaba N16961)).